We begin with the raw amino-acid sequence, 20 residues long: L-amino-acid oxidase L2 (20 aa).

The protein belongs to the flavin monoamine oxidase family. FIG1 subfamily. Monomer. This is in contrast with most of its orthologs, that are non-covalently linked homodimers. FAD is required as a cofactor. In terms of processing, N-glycosylated. As to expression, expressed by the venom gland.

Its subcellular location is the secreted. It catalyses the reaction an L-alpha-amino acid + O2 + H2O = a 2-oxocarboxylate + H2O2 + NH4(+). It carries out the reaction L-leucine + O2 + H2O = 4-methyl-2-oxopentanoate + H2O2 + NH4(+). The enzyme catalyses L-phenylalanine + O2 + H2O = 3-phenylpyruvate + H2O2 + NH4(+). The catalysed reaction is L-tryptophan + O2 + H2O = indole-3-pyruvate + H2O2 + NH4(+). It catalyses the reaction L-methionine + O2 + H2O = 4-methylsulfanyl-2-oxobutanoate + H2O2 + NH4(+). It carries out the reaction L-isoleucine + O2 + H2O = (S)-3-methyl-2-oxopentanoate + H2O2 + NH4(+). The enzyme catalyses L-tyrosine + O2 + H2O = 3-(4-hydroxyphenyl)pyruvate + H2O2 + NH4(+). In terms of biological role, catalyzes an oxidative deamination of predominantly hydrophobic and aromatic L-amino acids, thus producing hydrogen peroxide that may contribute to the diverse toxic effects of this enzyme. Is active on L-Ile, L-Leu, L-Met, L-Phe, L-Trp, and L-Tyr. Exhibits diverse biological activities, such as hemorrhage, hemolysis, edema, apoptosis of vascular endothelial cells or tumor cell lines, antibacterial and antiparasitic activities, as well as regulation of platelet aggregation. Its effect on platelets is controversial, since it either induces aggregation or inhibits agonist-induced aggregation. These different effects are probably due to different experimental conditions. The polypeptide is L-amino-acid oxidase L2 (Daboia russelii (Russel's viper)).